We begin with the raw amino-acid sequence, 527 residues long: MNRRALISVSDKTGVVDFARGLADLGFEIVSTGGTYQTIKAAGVPVTYVTEITGFPEILDGRVKTLHPKVHGGILARRTPEHLAQLEAHAIVPIDVVAVNLYPFRETVAKPGVTREEAVENIDIGGPAMVRASAKNHESVAIIVNPDRYATVLAELQQNGVVSEATRRALAREAFAHTAEYDAAIAAYLAAEAGDDDPFAGIFAPGKVEKVQDLRYGENPHQKAAFYRERGYRGAGAGTAKQRWGKELSFNNLLDLNAALELVREFDRPAAAIIKHNNPCGVAVAATLKEAYEKAFAADPVSAFGGIIAFNVAVDADTANEVVKTFMEAVIAPSFDEAALEILQQKKGLRIMETGPLADSAPATADVKKIRGGFLVQEADLGDVTAEQIQVVTERAPEEGELADLLFAWKVVKHVKSNAIVIAKDGVAIGVGAGQMNRVGSAQIALEQAKASRAFGGDSVDHNNPAQGAVLASDAFLPFKDTVETAARYGIRAIIQPGGSVRDAESIEACNRLGVAMVFTGMRHFKH.

One can recognise an MGS-like domain in the interval 1–144; that stretch reads MNRRALISVS…KNHESVAIIV (144 aa).

Belongs to the PurH family.

It carries out the reaction (6R)-10-formyltetrahydrofolate + 5-amino-1-(5-phospho-beta-D-ribosyl)imidazole-4-carboxamide = 5-formamido-1-(5-phospho-D-ribosyl)imidazole-4-carboxamide + (6S)-5,6,7,8-tetrahydrofolate. The enzyme catalyses IMP + H2O = 5-formamido-1-(5-phospho-D-ribosyl)imidazole-4-carboxamide. It functions in the pathway purine metabolism; IMP biosynthesis via de novo pathway; 5-formamido-1-(5-phospho-D-ribosyl)imidazole-4-carboxamide from 5-amino-1-(5-phospho-D-ribosyl)imidazole-4-carboxamide (10-formyl THF route): step 1/1. It participates in purine metabolism; IMP biosynthesis via de novo pathway; IMP from 5-formamido-1-(5-phospho-D-ribosyl)imidazole-4-carboxamide: step 1/1. This is Bifunctional purine biosynthesis protein PurH from Heliobacterium modesticaldum (strain ATCC 51547 / Ice1).